Reading from the N-terminus, the 2275-residue chain is Serine-rich adhesin for platelets (2275 aa).

A signal peptide spans 1–89 (MSKRQKEFHD…VNMLHDQQAF (89 aa)). Residues 90–264 (AASDAPLTSE…TANTITVNKD (175 aa)) are serine-rich repeat region 1, SRR1. Residues 100–111 (LNTQSETVGNQN) show a composition bias toward polar residues. 2 disordered regions span residues 100-229 (LNTQ…STST) and 751-2247 (NSMS…GLLG). Residues 112 to 128 (STTIEASTSTADSTSVT) are compositionally biased toward low complexity. Residues 129–140 (KNSSSVQTSNSD) are compositionally biased toward polar residues. Residues 150 to 229 (VTSTTNSTSN…NKTSTTSTST (80 aa)) are compositionally biased toward low complexity. The non-repeat region (NRR) stretch occupies residues 265–751 (NLKQYMTTSG…TTFKYEVTRN (487 aa)). Composition is skewed to low complexity over residues 752-1392 (SMSD…LSLS) and 1402-2218 (SNSA…ATSE). The tract at residues 752–2236 (SMSDSVSTSG…AQSEKRLPDT (1485 aa)) is serine-rich repeat region 2, SRR2. The LPXTG sorting signal signature appears at 2233 to 2237 (LPDTG). At Thr2236 the chain carries Pentaglycyl murein peptidoglycan amidated threonine. A propeptide spans 2237 to 2275 (GDSIKQNGLLGGVMTLLVGLGLMKRKKKKDENDQDDSQA) (removed by sortase).

It belongs to the serine-rich repeat protein (SRRP) family. As to quaternary structure, interacts with human gp-340 (DMBT1). In terms of processing, proteolytically cleaved by a metalloprotease. Glycosylated. It is probable that most of the Ser residues in SSR1 and SSR2 are O-GlcNAcylated. Sequential glycosylation by sugar transferases are able to generate complex sugar polymorphisms.

It localises to the secreted. It is found in the cell wall. In terms of biological role, mediates binding to human platelets, possibly through a receptor-ligand interaction. Probably associated with virulence in endovascular infection. Interacts with host (human) gp-340 via the non-repeat region (NRR or binding region). Binding is inhibited by N-acetylneuraminic acid (NeuAc). The protein is Serine-rich adhesin for platelets (sraP) of Staphylococcus aureus (strain MW2).